A 239-amino-acid polypeptide reads, in one-letter code: 1-(5-phosphoribosyl)-5-[(5-phosphoribosylamino)methylideneamino] imidazole-4-carboxamide isomerase (239 aa).

The active-site Proton acceptor is the Asp9. Asp131 (proton donor) is an active-site residue.

It belongs to the HisA/HisF family.

The protein resides in the cytoplasm. It catalyses the reaction 1-(5-phospho-beta-D-ribosyl)-5-[(5-phospho-beta-D-ribosylamino)methylideneamino]imidazole-4-carboxamide = 5-[(5-phospho-1-deoxy-D-ribulos-1-ylimino)methylamino]-1-(5-phospho-beta-D-ribosyl)imidazole-4-carboxamide. It functions in the pathway amino-acid biosynthesis; L-histidine biosynthesis; L-histidine from 5-phospho-alpha-D-ribose 1-diphosphate: step 4/9. This is 1-(5-phosphoribosyl)-5-[(5-phosphoribosylamino)methylideneamino] imidazole-4-carboxamide isomerase from Bacteroides thetaiotaomicron (strain ATCC 29148 / DSM 2079 / JCM 5827 / CCUG 10774 / NCTC 10582 / VPI-5482 / E50).